Reading from the N-terminus, the 767-residue chain is Cap-specific mRNA (nucleoside-2'-O-)-methyltransferase 2 (767 aa).

The Adrift-type SAM-dependent 2'-O-MTase domain occupies 109 to 322; sequence ELCTQAWCKF…VYVVCLRYKG (214 aa). The active site involves Lys-117. Positions 148, 167, and 235 each coordinate S-adenosyl-L-methionine. Asp-235 is an active-site residue. Catalysis depends on Lys-275, which acts as the Proton acceptor.

Its subcellular location is the nucleus. The protein localises to the cytoplasm. The enzyme catalyses a 5'-end (N(7)-methyl 5'-triphosphoguanosine)-(2'-O-methyl-ribonucleoside)-(ribonucleotide) in mRNA + S-adenosyl-L-methionine = a 5'-end (N(7)-methyl 5'-triphosphoguanosine)-(2'-O-methyl-ribonucleoside)-(2'-O-methyl-ribonucleotide) in mRNA + S-adenosyl-L-homocysteine + H(+). Functionally, S-adenosyl-L-methionine-dependent methyltransferase that mediates mRNA cap2 2'-O-ribose methylation to the 5'-cap structure of mRNAs. Methylates the ribose of the second nucleotide of a m(7)GpppG-capped mRNA and small nuclear RNA (snRNA) (cap0) to produce m(7)GpppRmpNm (cap2). Recognizes a guanosine cap on RNA independently of its N(7) methylation status. Display cap2 methylation on both cap0 and cap1. Displays a preference for cap1 RNAs. The protein is Cap-specific mRNA (nucleoside-2'-O-)-methyltransferase 2 (Cmtr2) of Mus musculus (Mouse).